The sequence spans 297 residues: ER membrane protein complex subunit 2 (297 aa).

The residue at position 2 (alanine 2) is an N-acetylalanine. TPR repeat units follow at residues 87-120 (HRVKRLTGMRFEAMERYDDAIQLYDRILQEDPTN), 155-188 (QEAWHELAELYINEHDYAKAAFCLEELMMTNPYN), and 192-225 (CQQYAEVKYTQGGLENLELSRKYFAQALKLNNRN). Lysine 255 is subject to N6-acetyllysine.

This sequence belongs to the EMC2 family. In terms of assembly, component of the ER membrane protein complex (EMC).

It localises to the endoplasmic reticulum membrane. Part of the endoplasmic reticulum membrane protein complex (EMC) that enables the energy-independent insertion into endoplasmic reticulum membranes of newly synthesized membrane proteins. Preferentially accommodates proteins with transmembrane domains that are weakly hydrophobic or contain destabilizing features such as charged and aromatic residues. Involved in the cotranslational insertion of multi-pass membrane proteins in which stop-transfer membrane-anchor sequences become ER membrane spanning helices. It is also required for the post-translational insertion of tail-anchored/TA proteins in endoplasmic reticulum membranes. By mediating the proper cotranslational insertion of N-terminal transmembrane domains in an N-exo topology, with translocated N-terminus in the lumen of the ER, controls the topology of multi-pass membrane proteins like the G protein-coupled receptors. By regulating the insertion of various proteins in membranes, it is indirectly involved in many cellular processes. The protein is ER membrane protein complex subunit 2 of Bos taurus (Bovine).